A 272-amino-acid polypeptide reads, in one-letter code: Phosphoglycolate phosphatase (272 aa).

The active-site Nucleophile is the Asp-19. Mg(2+) contacts are provided by Asp-19, Asp-21, and Asp-182.

This sequence belongs to the HAD-like hydrolase superfamily. CbbY/CbbZ/Gph/YieH family. The cofactor is Mg(2+).

The enzyme catalyses 2-phosphoglycolate + H2O = glycolate + phosphate. The protein operates within organic acid metabolism; glycolate biosynthesis; glycolate from 2-phosphoglycolate: step 1/1. In terms of biological role, specifically catalyzes the dephosphorylation of 2-phosphoglycolate. Is involved in the dissimilation of the intracellular 2-phosphoglycolate formed during the DNA repair of 3'-phosphoglycolate ends, a major class of DNA lesions induced by oxidative stress. The protein is Phosphoglycolate phosphatase of Pseudomonas putida (strain ATCC 47054 / DSM 6125 / CFBP 8728 / NCIMB 11950 / KT2440).